We begin with the raw amino-acid sequence, 149 residues long: Large ribosomal subunit protein uL11 (149 aa).

This sequence belongs to the universal ribosomal protein uL11 family. Part of the ribosomal stalk of the 50S ribosomal subunit. Interacts with L10 and the large rRNA to form the base of the stalk. L10 forms an elongated spine to which L12 dimers bind in a sequential fashion forming a multimeric L10(L12)X complex. Post-translationally, one or more lysine residues are methylated.

Functionally, forms part of the ribosomal stalk which helps the ribosome interact with GTP-bound translation factors. The protein is Large ribosomal subunit protein uL11 of Xanthobacter autotrophicus (strain ATCC BAA-1158 / Py2).